Reading from the N-terminus, the 347-residue chain is UDP-N-acetylenolpyruvoylglucosamine reductase (347 aa).

The FAD-binding PCMH-type domain maps to 16–187; that stretch reads AIEQCSHYLV…IAVGLKLPKT (172 aa). Arginine 163 is an active-site residue. Catalysis depends on serine 233, which acts as the Proton donor. Residue glutamate 328 is part of the active site.

The protein belongs to the MurB family. FAD is required as a cofactor.

Its subcellular location is the cytoplasm. The enzyme catalyses UDP-N-acetyl-alpha-D-muramate + NADP(+) = UDP-N-acetyl-3-O-(1-carboxyvinyl)-alpha-D-glucosamine + NADPH + H(+). The protein operates within cell wall biogenesis; peptidoglycan biosynthesis. Its function is as follows. Cell wall formation. The polypeptide is UDP-N-acetylenolpyruvoylglucosamine reductase (Vibrio vulnificus (strain YJ016)).